The chain runs to 382 residues: Mannitol-1-phosphate 5-dehydrogenase (382 aa).

Position 3–14 (Val3–Gly14) interacts with NAD(+).

The protein belongs to the mannitol dehydrogenase family.

The enzyme catalyses D-mannitol 1-phosphate + NAD(+) = beta-D-fructose 6-phosphate + NADH + H(+). The polypeptide is Mannitol-1-phosphate 5-dehydrogenase (Sodalis glossinidius (strain morsitans)).